The chain runs to 265 residues: uncharacterized protein (265 aa).

The active site involves Glu-47.

This sequence belongs to the PhzF family.

This is an uncharacterized protein from Halalkalibacterium halodurans (strain ATCC BAA-125 / DSM 18197 / FERM 7344 / JCM 9153 / C-125) (Bacillus halodurans).